The primary structure comprises 454 residues: Mitochondrial dynamics protein MID49 (454 aa).

The Mitochondrial intermembrane portion of the chain corresponds to 1 to 22 (MAEFSQKRGKRRSDEGLGSMVD). A Phosphoserine modification is found at serine 13. Residues 23-43 (FLLANARLVLGVGGAAVLGIA) form a helical membrane-spanning segment. Topologically, residues 44–454 (TLAVKRFIDR…SGLQEPEGLL (411 aa)) are cytoplasmic. Residues 76–119 (ATPHLQPRPPPAALSQPVLPLAPSSSAPEGPAETDPEVTPQLSS) are disordered. The span at 88–103 (ALSQPVLPLAPSSSAP) shows a compositional bias: low complexity.

It belongs to the MID49/MID51 family. Interacts with DNM1L. Expressed in all tissues tested with highest expression in heart and skeletal muscle.

The protein localises to the mitochondrion outer membrane. In terms of biological role, mitochondrial outer membrane protein involved in the regulation of mitochondrial organization. It is required for mitochondrial fission and promotes the recruitment and association of the fission mediator dynamin-related protein 1 (DNM1L) to the mitochondrial surface independently of the mitochondrial fission FIS1 and MFF proteins. Regulates DNM1L GTPase activity. This is Mitochondrial dynamics protein MID49 (MIEF2) from Homo sapiens (Human).